The sequence spans 288 residues: DegV domain-containing protein DR_1903 (288 aa).

In terms of domain architecture, DegV spans 2–280; it reads IAVTTESTAD…PGVVAVLAFP (279 aa). Hexadecanoate contacts are provided by T59 and T93.

May bind long-chain fatty acids, such as palmitate, and may play a role in lipid transport or fatty acid metabolism. This chain is DegV domain-containing protein DR_1903, found in Deinococcus radiodurans (strain ATCC 13939 / DSM 20539 / JCM 16871 / CCUG 27074 / LMG 4051 / NBRC 15346 / NCIMB 9279 / VKM B-1422 / R1).